The chain runs to 495 residues: Cysteine--tRNA ligase (495 aa).

A Zn(2+)-binding site is contributed by Cys29. The short motif at 31-41 (PTVYDYGHIGN) is the 'HIGH' region element. Residues Cys211, His236, and Glu240 each contribute to the Zn(2+) site. The 'KMSKS' region signature appears at 268-272 (KMSKS). Residue Lys271 coordinates ATP.

This sequence belongs to the class-I aminoacyl-tRNA synthetase family. In terms of assembly, monomer. Zn(2+) serves as cofactor.

It localises to the cytoplasm. It carries out the reaction tRNA(Cys) + L-cysteine + ATP = L-cysteinyl-tRNA(Cys) + AMP + diphosphate. The polypeptide is Cysteine--tRNA ligase (Koribacter versatilis (strain Ellin345)).